Here is a 421-residue protein sequence, read N- to C-terminus: UDP-N-acetylglucosamine 1-carboxyvinyltransferase (421 aa).

22–23 (KN) contacts phosphoenolpyruvate. Arg-93 serves as a coordination point for UDP-N-acetyl-alpha-D-glucosamine. The active-site Proton donor is Cys-117. A 2-(S-cysteinyl)pyruvic acid O-phosphothioketal modification is found at Cys-117. UDP-N-acetyl-alpha-D-glucosamine is bound by residues 122 to 126 (RPVDL), Asp-308, and Ile-330.

Belongs to the EPSP synthase family. MurA subfamily.

It is found in the cytoplasm. It catalyses the reaction phosphoenolpyruvate + UDP-N-acetyl-alpha-D-glucosamine = UDP-N-acetyl-3-O-(1-carboxyvinyl)-alpha-D-glucosamine + phosphate. It functions in the pathway cell wall biogenesis; peptidoglycan biosynthesis. Its function is as follows. Cell wall formation. Adds enolpyruvyl to UDP-N-acetylglucosamine. The sequence is that of UDP-N-acetylglucosamine 1-carboxyvinyltransferase from Pseudomonas fluorescens (strain ATCC BAA-477 / NRRL B-23932 / Pf-5).